The following is a 404-amino-acid chain: Omega-3 fatty acid desaturase, chloroplastic (404 aa).

Positions 28-50 are disordered; it reads TVDSSSSPPIEEEPKTQRFDPGA. Positions 121–125 match the Histidine box-1 motif; that stretch reads HDCGH. Positions 157 to 161 match the Histidine box-2 motif; sequence HRTHH. Positions 324–328 match the Histidine box-3 motif; sequence HVIHH.

The protein belongs to the fatty acid desaturase type 1 family.

The protein resides in the plastid. Its subcellular location is the chloroplast membrane. It functions in the pathway lipid metabolism; polyunsaturated fatty acid biosynthesis. Functionally, chloroplast omega-3 fatty acid desaturase introduces the third double bond in the biosynthesis of 16:3 and 18:3 fatty acids, important constituents of plant membranes. It is thought to use ferredoxin as an electron donor and to act on fatty acids esterified to galactolipids, sulfolipids and phosphatidylglycerol. In Brassica napus (Rape), this protein is Omega-3 fatty acid desaturase, chloroplastic (FAD7).